The sequence spans 501 residues: Sucrose-6-phosphate hydrolase (501 aa).

Substrate-binding positions include 44 to 47 (LLND), Gln63, 106 to 107 (YT), 167 to 168 (RD), and Glu222. The active site involves Asp47.

Belongs to the glycosyl hydrolase 32 family.

It carries out the reaction Hydrolysis of terminal non-reducing beta-D-fructofuranoside residues in beta-D-fructofuranosides.. It functions in the pathway glycan biosynthesis; sucrose metabolism. The chain is Sucrose-6-phosphate hydrolase (scrB) from Pediococcus pentosaceus.